Here is a 587-residue protein sequence, read N- to C-terminus: MSADPKVLLTDLIKTALKSVAPEHADTAILLERPKQASHGDFATNVALQLAKPLKRNPRELAALLLAELPASNLVAKTEVAGAGFINFTLAAAAKTAVVGEVLAKGADFGRGAKKNVKVQVEFVSANPTGPLHVGHGRGAAYGASLSDVLCFAGYDVTREYYVNDAGRQMDILALSTWLRYLALFGIDVPFPPNAYQGDYVIDMARGLRDAHQGRYAGVTLAQVLEGTPGLPVAERKDDEAKQQRELHLDGLIANAKRLLGEDYPFVHGFALNEQLGDGRDDLQEFGVHFDKWFSEKSLFDTGLVERAVAELEKRGHIYVQDGAKWFRSTDFGDEKDRVVQRENGLYTYFASDIAYHLNKYERGFDRIIDIWGADHHGYIPRVKGAIAALGLPPEKLEVALVQFAVLYRDGQKTSMSTRSGEFVTLRELRREVGNDACRFFYVLRKSDQHLDFDLDLAKSQSNENPVYYIQYAHARVCSVLNQWGGEPAELQAADLGKLENERELALCARLAGFPEVVQGAAADYAPHQIAFYLKDLAADFHSWYNAERMLVDDEAVKLARLALAAAVRSVLRGGLAVLGVSAPESM.

The 'HIGH' region motif lies at 126 to 136; it reads ANPTGPLHVGH.

The protein belongs to the class-I aminoacyl-tRNA synthetase family. Monomer.

It is found in the cytoplasm. It carries out the reaction tRNA(Arg) + L-arginine + ATP = L-arginyl-tRNA(Arg) + AMP + diphosphate. This chain is Arginine--tRNA ligase, found in Azoarcus sp. (strain BH72).